Here is a 435-residue protein sequence, read N- to C-terminus: T-box transcription factor T (435 aa).

The T-box DNA-binding region spans 51 to 219 (LWLRFKELTN…YNPFAKAFLD (169 aa)). 2 disordered regions span residues 280–310 (PALR…PSAC) and 384–412 (APLG…DVPD). Over residues 297–310 (RNNSPTYSDNPSAC) the composition is skewed to polar residues.

As to quaternary structure, monomer. Binds DNA as a monomer.

The protein localises to the nucleus. In terms of biological role, involved in the transcriptional regulation of genes required for mesoderm formation and differentiation. Binds to a palindromic site (called T site) and activates gene transcription when bound to such a site. This is T-box transcription factor T from Canis lupus familiaris (Dog).